The following is a 284-amino-acid chain: tRNA pseudouridine synthase A (284 aa).

D62 (nucleophile) is an active-site residue. Y120 contacts substrate.

This sequence belongs to the tRNA pseudouridine synthase TruA family. Homodimer.

It carries out the reaction uridine(38/39/40) in tRNA = pseudouridine(38/39/40) in tRNA. Its function is as follows. Formation of pseudouridine at positions 38, 39 and 40 in the anticodon stem and loop of transfer RNAs. This chain is tRNA pseudouridine synthase A, found in Thermosynechococcus vestitus (strain NIES-2133 / IAM M-273 / BP-1).